Consider the following 363-residue polypeptide: MNELLLNLVDPLHQWFLGLGDGGAVLWSVLKILLIAVPVIVTVAFYVVWERKLIGWMHVRHGPMYVGMGIFQAFADVFKLLFKEIVQPASSHKAMFVIAPLLTLAPAFAAWSVVPFDAKLVLSNANVGLLYLLAMTSLGVYGIILAGWASNSKYAFLGAMRSAAQVVSYEIAMGFALVGVMIASGSVNLSQIVFAQAGNSGFFDWFLIPLFPLFIVYWVSGVAETNRAPFDVVEGESEIVAGHMVEYSGGAFALFFLAEYANMILVSFLISIFFLGGWLSPIQGWVNADISPWIDWLWKGGWPWLLMKVFFFASAYIWFRASFPRYRYDQIMRLGWKVFIPLTIVWIAVTALMVFYGVIQKGV.

Helical transmembrane passes span 62-82 (GPMY…KLLF), 96-116 (FVIA…VVPF), 127-147 (VGLL…ILAG), 163-183 (AAQV…VMIA), 202-222 (FFDW…VSGV), 238-257 (EIVA…LFFL), 264-286 (ILVS…QGWV), 299-319 (KGGW…YIWF), and 339-359 (FIPL…YGVI).

The protein belongs to the complex I subunit 1 family. In terms of assembly, NDH-1 is composed of 14 different subunits. Subunits NuoA, H, J, K, L, M, N constitute the membrane sector of the complex.

Its subcellular location is the cell inner membrane. The enzyme catalyses a quinone + NADH + 5 H(+)(in) = a quinol + NAD(+) + 4 H(+)(out). Functionally, NDH-1 shuttles electrons from NADH, via FMN and iron-sulfur (Fe-S) centers, to quinones in the respiratory chain. The immediate electron acceptor for the enzyme in this species is believed to be ubiquinone. Couples the redox reaction to proton translocation (for every two electrons transferred, four hydrogen ions are translocated across the cytoplasmic membrane), and thus conserves the redox energy in a proton gradient. This subunit may bind ubiquinone. The polypeptide is NADH-quinone oxidoreductase subunit H (Xanthomonas axonopodis pv. citri (strain 306)).